Here is a 124-residue protein sequence, read N- to C-terminus: ATP synthase epsilon chain (124 aa).

This sequence belongs to the ATPase epsilon chain family. As to quaternary structure, F-type ATPases have 2 components, CF(1) - the catalytic core - and CF(0) - the membrane proton channel. CF(1) has five subunits: alpha(3), beta(3), gamma(1), delta(1), epsilon(1). CF(0) has three main subunits: a, b and c.

It is found in the cell membrane. In terms of biological role, produces ATP from ADP in the presence of a proton gradient across the membrane. The protein is ATP synthase epsilon chain of Streptomyces griseus subsp. griseus (strain JCM 4626 / CBS 651.72 / NBRC 13350 / KCC S-0626 / ISP 5235).